Consider the following 182-residue polypeptide: MSKQLAAQVPAEPVVLGKMGSSYGIRGWLRVFSSTEDAESIFDYQPWFIQKAGQWQQVQLESWKHHNQDLIIKLKGVDDRDAANLLTNCEIVVDSSQLPALEEGDYYWKDLMGCQVVTAEGYDLGKVIDMMETGSNDVLVIKANLKDAFGIKERLVPFLDGQVIKKVDLATRTIEVDWDPGF.

One can recognise a PRC barrel domain in the interval 102–182 (EEGDYYWKDL…TIEVDWDPGF (81 aa)).

The protein belongs to the RimM family. As to quaternary structure, binds ribosomal protein uS19.

The protein resides in the cytoplasm. In terms of biological role, an accessory protein needed during the final step in the assembly of 30S ribosomal subunit, possibly for assembly of the head region. Essential for efficient processing of 16S rRNA. May be needed both before and after RbfA during the maturation of 16S rRNA. It has affinity for free ribosomal 30S subunits but not for 70S ribosomes. In Salmonella enteritidis PT4 (strain P125109), this protein is Ribosome maturation factor RimM.